The chain runs to 173 residues: Dual-action ribosomal maturation protein DarP (173 aa).

It belongs to the DarP family.

The protein resides in the cytoplasm. Member of a network of 50S ribosomal subunit biogenesis factors which assembles along the 30S-50S interface, preventing incorrect 23S rRNA structures from forming. Promotes peptidyl transferase center (PTC) maturation. The protein is Dual-action ribosomal maturation protein DarP of Pseudomonas putida (strain GB-1).